Here is a 480-residue protein sequence, read N- to C-terminus: Bifunctional protein HldE (480 aa).

The interval 1-316 is ribokinase; sequence MNMHDFSKTK…EQLNASMRHQ (316 aa). Residue 192–195 coordinates ATP; that stretch reads NQGE. Residue Asp-261 is part of the active site. The cytidylyltransferase stretch occupies residues 342 to 480; the sequence is FTNGCFDLLH…EAEIKEGAAQ (139 aa).

The protein in the N-terminal section; belongs to the carbohydrate kinase PfkB family. This sequence in the C-terminal section; belongs to the cytidylyltransferase family. As to quaternary structure, homodimer.

It carries out the reaction D-glycero-beta-D-manno-heptose 7-phosphate + ATP = D-glycero-beta-D-manno-heptose 1,7-bisphosphate + ADP + H(+). The enzyme catalyses D-glycero-beta-D-manno-heptose 1-phosphate + ATP + H(+) = ADP-D-glycero-beta-D-manno-heptose + diphosphate. Its pathway is nucleotide-sugar biosynthesis; ADP-L-glycero-beta-D-manno-heptose biosynthesis; ADP-L-glycero-beta-D-manno-heptose from D-glycero-beta-D-manno-heptose 7-phosphate: step 1/4. It participates in nucleotide-sugar biosynthesis; ADP-L-glycero-beta-D-manno-heptose biosynthesis; ADP-L-glycero-beta-D-manno-heptose from D-glycero-beta-D-manno-heptose 7-phosphate: step 3/4. Catalyzes the phosphorylation of D-glycero-D-manno-heptose 7-phosphate at the C-1 position to selectively form D-glycero-beta-D-manno-heptose-1,7-bisphosphate. Functionally, catalyzes the ADP transfer from ATP to D-glycero-beta-D-manno-heptose 1-phosphate, yielding ADP-D-glycero-beta-D-manno-heptose. The polypeptide is Bifunctional protein HldE (Hydrogenovibrio crunogenus (strain DSM 25203 / XCL-2) (Thiomicrospira crunogena)).